Here is a 399-residue protein sequence, read N- to C-terminus: Phosphoglycerate kinase (399 aa).

Substrate is bound by residues 24–26, R41, 64–67, R123, and R160; these read DLN and HLGR. ATP is bound by residues K210, G298, E329, and 355 to 358; that span reads GGDS.

This sequence belongs to the phosphoglycerate kinase family. Monomer.

The protein localises to the cytoplasm. The catalysed reaction is (2R)-3-phosphoglycerate + ATP = (2R)-3-phospho-glyceroyl phosphate + ADP. It functions in the pathway carbohydrate degradation; glycolysis; pyruvate from D-glyceraldehyde 3-phosphate: step 2/5. This Salinispora tropica (strain ATCC BAA-916 / DSM 44818 / JCM 13857 / NBRC 105044 / CNB-440) protein is Phosphoglycerate kinase.